A 288-amino-acid chain; its full sequence is Putative transcription factor kapC (288 aa).

Residues 1-10 are compositionally biased toward pro residues; it reads MQPTLAPAPH. A disordered region spans residues 1 to 121; that stretch reads MQPTLAPAPH…AAQRAFRQRK (121 aa). A compositionally biased stretch (low complexity) spans 26–41; the sequence is HDQLLAAHQHLSHPQQ. A compositionally biased stretch (pro residues) spans 42 to 54; it reads ARPPPPPPQPPHM. Over residues 84 to 93 the composition is skewed to polar residues; it reads QPDLSGQESP. The bZIP domain maps to 100 to 163; it reads PLSTSKRAAQ…EYIINLQSRL (64 aa). The segment at 101–124 is basic motif; it reads LSTSKRAAQNRAAQRAFRQRKEAH. The segment covering 106 to 116 has biased composition (low complexity); the sequence is RAAQNRAAQRA. A leucine-zipper region spans residues 128 to 159; sequence LEGKVKAYETMGEAIKALQAENYQLREYIINL. 2 disordered regions span residues 172–226 and 242–288; these read ELPG…NDDM and PPTE…PLIS. The span at 202–212 shows a compositional bias: pro residues; it reads PVPPPTAPQQP. Residues 213-222 show a composition bias toward low complexity; it reads QPAQNQASAP.

The protein belongs to the bZIP family.

The protein localises to the nucleus. Putative transcription factor. The chain is Putative transcription factor kapC (kapC) from Aspergillus clavatus (strain ATCC 1007 / CBS 513.65 / DSM 816 / NCTC 3887 / NRRL 1 / QM 1276 / 107).